A 320-amino-acid chain; its full sequence is 1-aminocyclopropane-1-carboxylate oxidase 2 (320 aa).

Positions 111–143 (DEYRTAMKDFGKRLENLAEDLLDLLCENLGLEK) form a coiled coil. The 101-residue stretch at 156-256 (PTFGTKVSNY…RMSVASFYNP (101 aa)) folds into the Fe2OG dioxygenase domain. The Fe cation site is built by His-180, Asp-182, and His-237. A 2-oxoglutarate-binding site is contributed by Arg-247.

This sequence belongs to the iron/ascorbate-dependent oxidoreductase family. It depends on Fe(2+) as a cofactor. Cu(2+) is required as a cofactor. In terms of tissue distribution, expressed in vegetative tissues. Constitutively expressed in leaves and blades. In ethylene exposed etiolated seedlings, localized in cells at the outer side of the exaggerated hook in an ethylene-dependent manner and following an ethylene sensitive pattern. Also detected in the root tip when treated by ethylene.

The enzyme catalyses 1-aminocyclopropane-1-carboxylate + L-ascorbate + O2 = ethene + L-dehydroascorbate + hydrogen cyanide + CO2 + 2 H2O. Its pathway is alkene biosynthesis; ethylene biosynthesis via S-adenosyl-L-methionine; ethylene from S-adenosyl-L-methionine: step 2/2. Enzyme involved in the ethylene biosynthesis. Required to mediate the 1-aminocyclopropane-1-carboxylic acid (ACC)-mediated reversion of the ABA-induced inhibition of seed germination via endosperm rupture. May promote stem elongation by maximizing the extensibility cells, possibly by activating ethylene biosynthesis, in response to very-long-chain fatty acids (VLCFAs C20:0 to C30:0). This is 1-aminocyclopropane-1-carboxylate oxidase 2 (ACO2) from Arabidopsis thaliana (Mouse-ear cress).